The primary structure comprises 94 residues: Venom peptide SjAPI (94 aa).

Residues 1–24 (MKWGALLCIFGFLAFCSVLDRGLG) form the signal peptide. The propeptide occupies 25 to 30 (WIPDIW). 5 disulfide bridges follow: C33–C70, C43–C66, C47–C62, C51–C92, and C72–C86. The TIL domain maps to 33 to 92 (CSSKNEEFQQCGSSCPETCANHKNPEPKSCAAVCFVGCVCKPGFIRDDLKGSICVKPEDC). A protease binding loop region spans residues 63 to 65 (AAV).

This sequence belongs to the serine protease inhibitor-like (TIL domain-containing) family. Expressed by the venom gland.

It localises to the secreted. Its function is as follows. Recombinant protein inhibits both alpha-chymotrypsin (Ki=97.1 nM) and elastase (Ki=3700 nM). This chain is Venom peptide SjAPI, found in Scorpiops jendeki (Scorpion).